Reading from the N-terminus, the 599-residue chain is Serine hydroxymethyltransferase 6 (599 aa).

Residues 1–25 form a disordered region; sequence MDRIAQSDLSLGFGSSHALPLPHPP. N6-(pyridoxal phosphate)lysine is present on lysine 374.

It belongs to the SHMT family. In terms of assembly, homotetramer. Pyridoxal 5'-phosphate serves as cofactor.

The protein localises to the cytoplasm. The enzyme catalyses (6R)-5,10-methylene-5,6,7,8-tetrahydrofolate + glycine + H2O = (6S)-5,6,7,8-tetrahydrofolate + L-serine. The protein operates within one-carbon metabolism; tetrahydrofolate interconversion. Functionally, catalyzes the interconversion of serine and glycine. The protein is Serine hydroxymethyltransferase 6 (SHM6) of Arabidopsis thaliana (Mouse-ear cress).